The following is a 438-amino-acid chain: Adenosylhomocysteinase (438 aa).

Positions 64, 139, and 164 each coordinate substrate. 165–167 (TTT) lines the NAD(+) pocket. Residues lysine 194 and aspartate 198 each contribute to the substrate site. NAD(+) contacts are provided by residues asparagine 199, 228 to 233 (GYGDVG), glutamate 251, asparagine 286, 307 to 309 (IGH), and asparagine 352.

Belongs to the adenosylhomocysteinase family. NAD(+) is required as a cofactor.

It localises to the cytoplasm. It catalyses the reaction S-adenosyl-L-homocysteine + H2O = L-homocysteine + adenosine. It participates in amino-acid biosynthesis; L-homocysteine biosynthesis; L-homocysteine from S-adenosyl-L-homocysteine: step 1/1. May play a key role in the regulation of the intracellular concentration of adenosylhomocysteine. This is Adenosylhomocysteinase from Coxiella burnetii (strain CbuK_Q154) (Coxiella burnetii (strain Q154)).